The sequence spans 206 residues: LOB domain-containing protein 35 (206 aa).

The region spanning 4–105 is the LOB domain; sequence TCCSACKVMK…EQINSAKNEL (102 aa). The segment at 184–206 is disordered; that stretch reads ASTSGGTSATQKTLPFPQNHNQP.

It belongs to the LOB domain-containing protein family.

The polypeptide is LOB domain-containing protein 35 (LBD35) (Arabidopsis thaliana (Mouse-ear cress)).